Reading from the N-terminus, the 250-residue chain is 1-(5-phosphoribosyl)-5-[(5-phosphoribosylamino)methylideneamino] imidazole-4-carboxamide isomerase (250 aa).

The active-site Proton acceptor is Asp-8. Asp-129 (proton donor) is an active-site residue.

It belongs to the HisA/HisF family.

The protein resides in the cytoplasm. It catalyses the reaction 1-(5-phospho-beta-D-ribosyl)-5-[(5-phospho-beta-D-ribosylamino)methylideneamino]imidazole-4-carboxamide = 5-[(5-phospho-1-deoxy-D-ribulos-1-ylimino)methylamino]-1-(5-phospho-beta-D-ribosyl)imidazole-4-carboxamide. Its pathway is amino-acid biosynthesis; L-histidine biosynthesis; L-histidine from 5-phospho-alpha-D-ribose 1-diphosphate: step 4/9. In Desulfatibacillum aliphaticivorans, this protein is 1-(5-phosphoribosyl)-5-[(5-phosphoribosylamino)methylideneamino] imidazole-4-carboxamide isomerase.